The chain runs to 260 residues: Ribosomal RNA small subunit methyltransferase J (260 aa).

Residues 108-109, 124-125, and Asp-178 contribute to the S-adenosyl-L-methionine site; these read RD and ER.

This sequence belongs to the methyltransferase superfamily. RsmJ family.

It is found in the cytoplasm. It catalyses the reaction guanosine(1516) in 16S rRNA + S-adenosyl-L-methionine = N(2)-methylguanosine(1516) in 16S rRNA + S-adenosyl-L-homocysteine + H(+). In terms of biological role, specifically methylates the guanosine in position 1516 of 16S rRNA. The protein is Ribosomal RNA small subunit methyltransferase J of Ectopseudomonas mendocina (strain ymp) (Pseudomonas mendocina).